Here is a 104-residue protein sequence, read N- to C-terminus: Large ribosomal subunit protein uL24 (104 aa).

This sequence belongs to the universal ribosomal protein uL24 family. Part of the 50S ribosomal subunit.

Its function is as follows. One of two assembly initiator proteins, it binds directly to the 5'-end of the 23S rRNA, where it nucleates assembly of the 50S subunit. In terms of biological role, one of the proteins that surrounds the polypeptide exit tunnel on the outside of the subunit. The protein is Large ribosomal subunit protein uL24 of Yersinia enterocolitica serotype O:8 / biotype 1B (strain NCTC 13174 / 8081).